Reading from the N-terminus, the 87-residue chain is HssA/B-like protein 56 (87 aa).

Belongs to the hssA/B family.

The chain is HssA/B-like protein 56 (hssl56) from Dictyostelium discoideum (Social amoeba).